Consider the following 392-residue polypeptide: Formate-dependent phosphoribosylglycinamide formyltransferase (392 aa).

N(1)-(5-phospho-beta-D-ribosyl)glycinamide contacts are provided by residues 22–23 and Glu82; that span reads EL. ATP-binding positions include Arg114, Lys155, 160 to 165, 195 to 198, and Glu203; these read SSGKGQ and EKII. One can recognise an ATP-grasp domain in the interval 119–308; sequence VLVSKKLNIL…EFALHVRSFL (190 aa). Positions 267 and 279 each coordinate Mg(2+). Residues Asp286, Lys355, and 362–363 each bind N(1)-(5-phospho-beta-D-ribosyl)glycinamide; that span reads RR.

The protein belongs to the PurK/PurT family. As to quaternary structure, homodimer.

The enzyme catalyses N(1)-(5-phospho-beta-D-ribosyl)glycinamide + formate + ATP = N(2)-formyl-N(1)-(5-phospho-beta-D-ribosyl)glycinamide + ADP + phosphate + H(+). It participates in purine metabolism; IMP biosynthesis via de novo pathway; N(2)-formyl-N(1)-(5-phospho-D-ribosyl)glycinamide from N(1)-(5-phospho-D-ribosyl)glycinamide (formate route): step 1/1. Functionally, involved in the de novo purine biosynthesis. Catalyzes the transfer of formate to 5-phospho-ribosyl-glycinamide (GAR), producing 5-phospho-ribosyl-N-formylglycinamide (FGAR). Formate is provided by PurU via hydrolysis of 10-formyl-tetrahydrofolate. The polypeptide is Formate-dependent phosphoribosylglycinamide formyltransferase (Wigglesworthia glossinidia brevipalpis).